Consider the following 357-residue polypeptide: Protein pelota homolog (357 aa).

It belongs to the eukaryotic release factor 1 family. Pelota subfamily. Monomer. Requires a divalent metal cation as cofactor.

The protein localises to the cytoplasm. Its function is as follows. May function in recognizing stalled ribosomes, interact with stem-loop structures in stalled mRNA molecules, and effect endonucleolytic cleavage of the mRNA. May play a role in the release non-functional ribosomes and degradation of damaged mRNAs. Has endoribonuclease activity. The polypeptide is Protein pelota homolog (Thermococcus kodakarensis (strain ATCC BAA-918 / JCM 12380 / KOD1) (Pyrococcus kodakaraensis (strain KOD1))).